We begin with the raw amino-acid sequence, 457 residues long: Bifunctional protein GlmU (457 aa).

The segment at 1–229 is pyrophosphorylase; the sequence is MDLAAVILAA…PVEVTGINDR (229 aa). UDP-N-acetyl-alpha-D-glucosamine contacts are provided by residues 8-11, Lys-22, Gln-72, and 77-78; these read LAAG and GT. Asp-102 is a binding site for Mg(2+). Gly-139, Glu-154, Asn-169, and Asn-227 together coordinate UDP-N-acetyl-alpha-D-glucosamine. Asn-227 lines the Mg(2+) pocket. Residues 230 to 250 form a linker region; that stretch reads RQLAEVEKYLRRRVLEDLMQS. Residues 251 to 457 are N-acetyltransferase; sequence GVTVLDPAST…WAAKKRDKKV (207 aa). 2 residues coordinate UDP-N-acetyl-alpha-D-glucosamine: Arg-332 and Lys-350. His-362 functions as the Proton acceptor in the catalytic mechanism. The UDP-N-acetyl-alpha-D-glucosamine site is built by Tyr-365 and Asn-376. Acetyl-CoA-binding positions include 385-386, Ser-404, Ala-422, and Arg-439; that span reads NY.

In the N-terminal section; belongs to the N-acetylglucosamine-1-phosphate uridyltransferase family. The protein in the C-terminal section; belongs to the transferase hexapeptide repeat family. In terms of assembly, homotrimer. Mg(2+) serves as cofactor.

It is found in the cytoplasm. It catalyses the reaction alpha-D-glucosamine 1-phosphate + acetyl-CoA = N-acetyl-alpha-D-glucosamine 1-phosphate + CoA + H(+). The catalysed reaction is N-acetyl-alpha-D-glucosamine 1-phosphate + UTP + H(+) = UDP-N-acetyl-alpha-D-glucosamine + diphosphate. It participates in nucleotide-sugar biosynthesis; UDP-N-acetyl-alpha-D-glucosamine biosynthesis; N-acetyl-alpha-D-glucosamine 1-phosphate from alpha-D-glucosamine 6-phosphate (route II): step 2/2. Its pathway is nucleotide-sugar biosynthesis; UDP-N-acetyl-alpha-D-glucosamine biosynthesis; UDP-N-acetyl-alpha-D-glucosamine from N-acetyl-alpha-D-glucosamine 1-phosphate: step 1/1. The protein operates within bacterial outer membrane biogenesis; LPS lipid A biosynthesis. Functionally, catalyzes the last two sequential reactions in the de novo biosynthetic pathway for UDP-N-acetylglucosamine (UDP-GlcNAc). The C-terminal domain catalyzes the transfer of acetyl group from acetyl coenzyme A to glucosamine-1-phosphate (GlcN-1-P) to produce N-acetylglucosamine-1-phosphate (GlcNAc-1-P), which is converted into UDP-GlcNAc by the transfer of uridine 5-monophosphate (from uridine 5-triphosphate), a reaction catalyzed by the N-terminal domain. The protein is Bifunctional protein GlmU of Pelotomaculum thermopropionicum (strain DSM 13744 / JCM 10971 / SI).